Here is a 214-residue protein sequence, read N- to C-terminus: Homeobox protein HEX homolog pha-2 (214 aa).

Disordered stretches follow at residues 1-50 and 180-214; these read MDQK…QKME and RRVR…LSHG. Positions 24-34 are enriched in low complexity; the sequence is SSESPIPTGSE. A compositionally biased stretch (polar residues) spans 35-44; the sequence is CSLNESSDTT. A DNA-binding region (homeobox) is located at residues 124–183; the sequence is RKGGQIRFTNEQTDALEHKFDSHKYLSPQERKKLAKSLSLSERQVKTWFQNRRAKWRRVR. Residues 200-214 are compositionally biased toward polar residues; sequence SLGQLQSSNPFLSHG.

Its subcellular location is the nucleus. Functionally, transcriptional repressor. Involved in pharyngeal development and required for the formation of the pharyngeal isthmus. Plays a role in modulating cytoskeleton in the muscle cells of the isthmus. Regulates expression of the acetylcholinesterase genes ace-1 and ace-2. May regulate its own expression. The protein is Homeobox protein HEX homolog pha-2 of Caenorhabditis elegans.